We begin with the raw amino-acid sequence, 264 residues long: Glutamate racemase (264 aa).

Residues 10 to 11 (DS) and 42 to 43 (YG) each bind substrate. Cysteine 73 functions as the Proton donor/acceptor in the catalytic mechanism. 74-75 (NT) is a binding site for substrate. Cysteine 181 acts as the Proton donor/acceptor in catalysis. A substrate-binding site is contributed by 182 to 183 (TH).

The protein belongs to the aspartate/glutamate racemases family.

It carries out the reaction L-glutamate = D-glutamate. It functions in the pathway cell wall biogenesis; peptidoglycan biosynthesis. In terms of biological role, provides the (R)-glutamate required for cell wall biosynthesis. The protein is Glutamate racemase of Thermoanaerobacter pseudethanolicus (strain ATCC 33223 / 39E) (Clostridium thermohydrosulfuricum).